Reading from the N-terminus, the 719-residue chain is DNA replication licensing factor MCM7 (719 aa).

A2 is modified (N-acetylalanine). Residues K15 and K28 each participate in a glycyl lysine isopeptide (Lys-Gly) (interchain with G-Cter in SUMO2) cross-link. Residues S121 and S314 each carry the phosphoserine modification. In terms of domain architecture, MCM spans 332–538; the sequence is FYEKLAASIA…NDLRLAQHIT (207 aa). Y345 lines the ATP pocket. The residue at position 365 (S365) is a Phosphoserine. The ATP site is built by G384, A386, K387, S388, and N489. The residue at position 500 (S500) is a Phosphoserine. The Arginine finger signature appears at 513-516; the sequence is SRFD. R514 is an ATP binding site. Residues 521–564 form an interaction with RAD17 region; that stretch reads IQDRPDRDNDLRLAQHITYVHQHSRQPPSQFEPLDMKLMRRYIA. Positions 577–719 are interaction with ATRIP; the sequence is LADYITAAYV…NASRTRITFV (143 aa). Position 604 (R604) interacts with ATP. Position 678 is a phosphoserine (S678).

It belongs to the MCM family. As to quaternary structure, component of the MCM2-7 complex. The complex forms a toroidal hexameric ring with the proposed subunit order MCM2-MCM6-MCM4-MCM7-MCM3-MCM5. Component of the CMG helicase complex, a hexameric ring of related MCM2-7 subunits stabilized by CDC45 and the tetrameric GINS complex. Interacts with the ATR-ATRIP complex and with RAD17. Interacts with TIPIN. Interacts with MCMBP. Interacts with ANKRD17. Component of the replisome complex composed of at least DONSON, MCM2, MCM7, PCNA and TICRR. In terms of processing, O-glycosylated (O-GlcNAcylated), in a cell cycle-dependent manner. Post-translationally, ubiquitinated by ECS(LRR1) E3 ubiquitin-protein ligase complex when forks converge following formation of DNA interstrand cross-links. During mitosis, ubiquitinated by TRAIP when forks converge following formation of DNA interstrand cross-links. Short ubiquitin chains on MCM7 promote recruitment of DNA glycosylase NEIL3. If the interstrand cross-link cannot be cleaved by NEIL3, the ubiquitin chains continue to grow on MCM7, promoting the unloading of the CMG helicase complex by the VCP/p97 ATPase.

It is found in the nucleus. Its subcellular location is the chromosome. The enzyme catalyses ATP + H2O = ADP + phosphate + H(+). Its function is as follows. Acts as a component of the MCM2-7 complex (MCM complex) which is the replicative helicase essential for 'once per cell cycle' DNA replication initiation and elongation in eukaryotic cells. Core component of CDC45-MCM-GINS (CMG) helicase, the molecular machine that unwinds template DNA during replication, and around which the replisome is built. The active ATPase sites in the MCM2-7 ring are formed through the interaction surfaces of two neighboring subunits such that a critical structure of a conserved arginine finger motif is provided in trans relative to the ATP-binding site of the Walker A box of the adjacent subunit. The six ATPase active sites, however, are likely to contribute differentially to the complex helicase activity. Required for S-phase checkpoint activation upon UV-induced damage. The protein is DNA replication licensing factor MCM7 of Homo sapiens (Human).